A 626-amino-acid chain; its full sequence is DNA-directed RNA polymerase subunit gamma (626 aa).

4 residues coordinate Zn(2+): C71, C73, C86, and C89. Residues D467, D469, and D471 each contribute to the Mg(2+) site.

Belongs to the RNA polymerase beta' chain family. RpoC1 subfamily. As to quaternary structure, in cyanobacteria the RNAP catalytic core is composed of 2 alpha, 1 beta, 1 beta', 1 gamma and 1 omega subunit. When a sigma factor is associated with the core the holoenzyme is formed, which can initiate transcription. Mg(2+) is required as a cofactor. It depends on Zn(2+) as a cofactor.

The catalysed reaction is RNA(n) + a ribonucleoside 5'-triphosphate = RNA(n+1) + diphosphate. In terms of biological role, DNA-dependent RNA polymerase catalyzes the transcription of DNA into RNA using the four ribonucleoside triphosphates as substrates. This chain is DNA-directed RNA polymerase subunit gamma, found in Synechocystis sp. (strain ATCC 27184 / PCC 6803 / Kazusa).